A 360-amino-acid polypeptide reads, in one-letter code: GTPase Obg (360 aa).

Residues 1–156 form the Obg domain; it reads MFVDSVEIII…KCVRLELKLI (156 aa). The OBG-type G domain maps to 157–360; it reads ADIGLVGFPN…LKFVLLEALP (204 aa). GTP contacts are provided by residues 163 to 170, 188 to 192, 210 to 213, 279 to 282, and 341 to 343; these read GFPNAGKS, FTTLV, DIPG, NKCD, and SAV. Mg(2+) is bound by residues Ser170 and Thr190.

This sequence belongs to the TRAFAC class OBG-HflX-like GTPase superfamily. OBG GTPase family. Monomer. It depends on Mg(2+) as a cofactor.

It localises to the cytoplasm. In terms of biological role, an essential GTPase which binds GTP, GDP and possibly (p)ppGpp with moderate affinity, with high nucleotide exchange rates and a fairly low GTP hydrolysis rate. Plays a role in control of the cell cycle, stress response, ribosome biogenesis and in those bacteria that undergo differentiation, in morphogenesis control. In Helicobacter pylori (strain ATCC 700392 / 26695) (Campylobacter pylori), this protein is GTPase Obg.